A 1053-amino-acid chain; its full sequence is DNA-directed RNA polymerase subunit beta' (1053 aa).

Zn(2+) is bound by residues cysteine 60, cysteine 62, cysteine 75, and cysteine 78. 3 residues coordinate Mg(2+): aspartate 449, aspartate 451, and aspartate 453.

Belongs to the RNA polymerase beta' chain family. As to quaternary structure, the RNAP catalytic core consists of 2 alpha, 1 beta, 1 beta' and 1 omega subunit. When a sigma factor is associated with the core the holoenzyme is formed, which can initiate transcription. Mg(2+) is required as a cofactor. Zn(2+) serves as cofactor.

It carries out the reaction RNA(n) + a ribonucleoside 5'-triphosphate = RNA(n+1) + diphosphate. Its function is as follows. DNA-dependent RNA polymerase catalyzes the transcription of DNA into RNA using the four ribonucleoside triphosphates as substrates. This chain is DNA-directed RNA polymerase subunit beta', found in Brochothrix thermosphacta (Microbacterium thermosphactum).